The sequence spans 570 residues: MSRLEAKKPSLCKTEPLTSEKVRSTLSVLKGVIASCYGPSGRLKQLHNGLGGCVYTTSQSSALLRNLSVTHPVLKILTSSVQNHVSCFSDCGLFTAILCCNLIENIQRLDLTPATAIKLNKYLLSLCTSYLKSEACSCRIPVDFRSTHTFLSLVHSILTSKPACMLTRKETDHIGALILKAFLLTIPESTEERMVLGKSIIVPLKGQRVTDSTVLPGLLIEASEVQLRRLLPTQKASGLRVALFCTSLSGDFSNAGEGVVVAHYQVSLENAVLEQLLNLGRRLVTDHVDLVLCQKVIHPSLKQFFSERHVMAIDRVGVTLMESLSKVTGATPIGSLNPIVSTTYGSVKDVCSARFGSKHFFHLLPNEATVCTLLLCSRNDTAWEELKLTCQTAMHVLQLTIKEPWVLLGGGCTETHLAAYVRHKVHHEAEAIVRDDGCTQAKLHVAAEAFCSALESVAGSLEHDGGEILIDTKYGHLWSCQADSASVGNWSDTLSRCGCGLYNSQEELSWSVLRSTYHPFAPQTCLPQAALGSASNLTVDCFTAKLSGLQVAVETANLILDLSYVIEDKN.

Position 192 to 199 (192 to 199) interacts with ATP; it reads ERMVLGKS. The substrate-binding apical domain stretch occupies residues 198-370; it reads KSIIVPLKGQ…FHLLPNEATV (173 aa).

This sequence belongs to the TCP-1 chaperonin family. As to quaternary structure, component of a complex composed at least of MKKS, BBS10, BBS12, TCP1, CCT2, CCT3, CCT4, CCT5 and CCT8. Interacts with STUB1. Interacts with BBS2 (via coiled coil domain). Interacts with CCDC28B. Interacts with BBS12. Interacts with SMARCC1, a component of the SWI/SNF complexes; the interaction takes place predominantly in the cytoplasm and may modulate SMARCC1 location. Interacts with DLEC1. In terms of tissue distribution, widely expressed in adult and fetal tissues. Expressed in the developing heart, brain retina, limb buds, as well as in the developing neural tube. Expressed in the embryo in the first and second branchial arches. Expressed in parafin embedded tissue sections of brain, kidney, retina, olfactory epithelium and the ependymal layer of ventricles. Detected only in restricted regions of these tissue sections, including the ciliated border of renal tubules, the connecting cilium and the inner and outer nuclear layers of retina, and the ciliated layer of olfactory epithelia.

The protein resides in the cytoplasm. Its subcellular location is the cytoskeleton. The protein localises to the microtubule organizing center. It is found in the centrosome. It localises to the cytosol. The protein resides in the nucleus. Its function is as follows. Probable molecular chaperone that assists the folding of proteins upon ATP hydrolysis. Plays a role in the assembly of BBSome, a complex involved in ciliogenesis regulating transports vesicles to the cilia. May play a role in protein processing in limb, cardiac and reproductive system development. May play a role in cytokinesis. This is Molecular chaperone MKKS (Mkks) from Mus musculus (Mouse).